We begin with the raw amino-acid sequence, 304 residues long: Phosphatidylinositol mannoside acyltransferase (304 aa).

Catalysis depends on histidine 126, which acts as the Proton acceptor. Residues histidine 126 and arginine 164 each contribute to the hexadecanoyl-CoA site. Residue glutamate 200 is part of the active site. Hexadecanoyl-CoA is bound by residues serine 206 and glutamate 229.

It belongs to the LpxL/LpxM/LpxP family. Monomer.

Its subcellular location is the cell inner membrane. The catalysed reaction is a 2,6-O-bis(alpha-D-mannopyranosyl)-1-phosphatidyl-1D-myo-inositol + an acyl-CoA = a 2-O-(alpha-D-mannosyl)-6-O-(6-O-acyl-alpha-D-mannosyl)-1-phosphatidyl-1D-myo-inositol + CoA. It carries out the reaction a 1,2-diacyl-sn-glycero-3-phospho-[alpha-D-mannopyranosyl-(1&lt;-&gt;6)-D-myo-inositol] + an acyl-CoA = a 1,2-diacyl-sn-glycero-3-phospho-[alpha-D-6-acyl-mannopyranosyl-(1&lt;-&gt;6)-D-myo-inositol] + CoA. It functions in the pathway phospholipid metabolism; phosphatidylinositol metabolism. In terms of biological role, catalyzes the transfer of a palmitoyl moiety from palmitoyl-CoA to the 6-position of the mannose ring linked to the 2-position of myo-inositol in phosphatidyl-myo-inositol monomannoside (PIM1) or dimannoside (PIM2). In Mycolicibacterium smegmatis (strain ATCC 700084 / mc(2)155) (Mycobacterium smegmatis), this protein is Phosphatidylinositol mannoside acyltransferase.